The chain runs to 513 residues: Alpha-amylase mde5 (513 aa).

The first 25 residues, 1–25 (MKHNEVFGWTLKVLSFLLVVIPANA), serve as a signal peptide directing secretion. An intrachain disulfide couples Cys-52 to Cys-60. Position 105 (Trp-105) interacts with substrate. Asn-143 lines the Ca(2+) pocket. His-144 lines the substrate pocket. N-linked (GlcNAc...) asparagine glycosylation is present at Asn-162. Cys-171 and Cys-184 form a disulfide bridge. Positions 182 and 195 each coordinate Ca(2+). Arg-224 is a substrate binding site. Residues Asp-226, His-230, and Glu-250 each coordinate Ca(2+). The active-site Nucleophile is the Asp-226. Residue 229-230 (KH) participates in substrate binding. Residue Glu-250 is the Proton donor of the active site. Position 254 (Gly-254) interacts with substrate. A disulfide bond links Cys-260 and Cys-304. Substrate is bound at residue Asp-318. An N-linked (GlcNAc...) asparagine glycan is attached at Asn-357. Residue Arg-365 participates in substrate binding. An intrachain disulfide couples Cys-454 to Cys-488.

The protein belongs to the glycosyl hydrolase 13 family. Ca(2+) serves as cofactor.

The protein resides in the endoplasmic reticulum. It carries out the reaction Endohydrolysis of (1-&gt;4)-alpha-D-glucosidic linkages in polysaccharides containing three or more (1-&gt;4)-alpha-linked D-glucose units.. The sequence is that of Alpha-amylase mde5 (mde5) from Schizosaccharomyces pombe (strain 972 / ATCC 24843) (Fission yeast).